Here is a 209-residue protein sequence, read N- to C-terminus: 3-demethoxyubiquinol 3-hydroxylase (209 aa).

Fe cation contacts are provided by Glu58, Glu88, His91, Glu140, Glu172, and His175.

Belongs to the COQ7 family. It depends on Fe cation as a cofactor.

It is found in the cell membrane. It catalyses the reaction a 5-methoxy-2-methyl-3-(all-trans-polyprenyl)benzene-1,4-diol + AH2 + O2 = a 3-demethylubiquinol + A + H2O. The protein operates within cofactor biosynthesis; ubiquinone biosynthesis. Its function is as follows. Catalyzes the hydroxylation of 2-nonaprenyl-3-methyl-6-methoxy-1,4-benzoquinol during ubiquinone biosynthesis. The polypeptide is 3-demethoxyubiquinol 3-hydroxylase (Polaromonas sp. (strain JS666 / ATCC BAA-500)).